Reading from the N-terminus, the 183-residue chain is RNA 2',3'-cyclic phosphodiesterase (183 aa).

His44 acts as the Proton donor in catalysis. Short sequence motifs (HXTX) lie at residues 44–47 (HITL) and 130–133 (HMTL). Catalysis depends on His130, which acts as the Proton acceptor.

This sequence belongs to the 2H phosphoesterase superfamily. ThpR family.

It carries out the reaction a 3'-end 2',3'-cyclophospho-ribonucleotide-RNA + H2O = a 3'-end 2'-phospho-ribonucleotide-RNA + H(+). In terms of biological role, hydrolyzes RNA 2',3'-cyclic phosphodiester to an RNA 2'-phosphomonoester. This chain is RNA 2',3'-cyclic phosphodiesterase (ytlP), found in Bacillus subtilis (strain 168).